A 118-amino-acid polypeptide reads, in one-letter code: Large ribosomal subunit protein uL18 (118 aa).

Belongs to the universal ribosomal protein uL18 family. As to quaternary structure, part of the 50S ribosomal subunit; part of the 5S rRNA/L5/L18/L25 subcomplex. Contacts the 5S and 23S rRNAs.

In terms of biological role, this is one of the proteins that bind and probably mediate the attachment of the 5S RNA into the large ribosomal subunit, where it forms part of the central protuberance. In Campylobacter hominis (strain ATCC BAA-381 / DSM 21671 / CCUG 45161 / LMG 19568 / NCTC 13146 / CH001A), this protein is Large ribosomal subunit protein uL18.